A 427-amino-acid chain; its full sequence is Dihydroorotase (427 aa).

Residues His-60 and His-62 each contribute to the Zn(2+) site. Residues 62-64 (HFR) and Asn-94 contribute to the substrate site. Residues Asp-152, His-179, and His-232 each coordinate Zn(2+). Asn-278 lines the substrate pocket. Asp-305 contacts Zn(2+). The active site involves Asp-305. Substrate is bound by residues His-309 and 323–324 (FG).

Belongs to the metallo-dependent hydrolases superfamily. DHOase family. Class I DHOase subfamily. Requires Zn(2+) as cofactor.

The enzyme catalyses (S)-dihydroorotate + H2O = N-carbamoyl-L-aspartate + H(+). It functions in the pathway pyrimidine metabolism; UMP biosynthesis via de novo pathway; (S)-dihydroorotate from bicarbonate: step 3/3. Catalyzes the reversible cyclization of carbamoyl aspartate to dihydroorotate. In Enterococcus faecalis (strain ATCC 700802 / V583), this protein is Dihydroorotase.